Here is a 361-residue protein sequence, read N- to C-terminus: S-adenosylmethionine decarboxylase proenzyme (361 aa).

Catalysis depends on residues Glu-13 and Glu-16. The active-site Schiff-base intermediate with substrate; via pyruvic acid is the Ser-73. Position 73 is a pyruvic acid (Ser); by autocatalysis (Ser-73). Cys-87 serves as the catalytic Proton donor; for catalytic activity. Residues Ser-236 and His-249 each act as proton acceptor; for processing activity in the active site.

This sequence belongs to the eukaryotic AdoMetDC family. Requires pyruvate as cofactor. Is synthesized initially as an inactive proenzyme. Formation of the active enzyme involves a self-maturation process in which the active site pyruvoyl group is generated from an internal serine residue via an autocatalytic post-translational modification. Two non-identical subunits are generated from the proenzyme in this reaction, and the pyruvate is formed at the N-terminus of the alpha chain, which is derived from the carboxyl end of the proenzyme. The post-translation cleavage follows an unusual pathway, termed non-hydrolytic serinolysis, in which the side chain hydroxyl group of the serine supplies its oxygen atom to form the C-terminus of the beta chain, while the remainder of the serine residue undergoes an oxidative deamination to produce ammonia and the pyruvoyl group blocking the N-terminus of the alpha chain.

The enzyme catalyses S-adenosyl-L-methionine + H(+) = S-adenosyl 3-(methylsulfanyl)propylamine + CO2. It functions in the pathway amine and polyamine biosynthesis; S-adenosylmethioninamine biosynthesis; S-adenosylmethioninamine from S-adenosyl-L-methionine: step 1/1. The chain is S-adenosylmethionine decarboxylase proenzyme (SAMDC1) from Nicotiana sylvestris (Wood tobacco).